Here is a 110-residue protein sequence, read N- to C-terminus: NADH-quinone oxidoreductase subunit K (110 aa).

The next 3 helical transmembrane spans lie at 13–33, 38–58, and 70–90; these read VTHG…GIII, ILIL…NFLI, and VFVF…LAIV.

The protein belongs to the complex I subunit 4L family. As to quaternary structure, NDH-1 is composed of 14 different subunits. Subunits NuoA, H, J, K, L, M, N constitute the membrane sector of the complex.

The protein resides in the cell inner membrane. The catalysed reaction is a quinone + NADH + 5 H(+)(in) = a quinol + NAD(+) + 4 H(+)(out). NDH-1 shuttles electrons from NADH, via FMN and iron-sulfur (Fe-S) centers, to quinones in the respiratory chain. The immediate electron acceptor for the enzyme in this species is believed to be ubiquinone. Couples the redox reaction to proton translocation (for every two electrons transferred, four hydrogen ions are translocated across the cytoplasmic membrane), and thus conserves the redox energy in a proton gradient. The protein is NADH-quinone oxidoreductase subunit K of Francisella tularensis subsp. holarctica (strain FTNF002-00 / FTA).